A 313-amino-acid chain; its full sequence is 1-phosphofructokinase (313 aa).

ATP contacts are provided by residues 222-227 and 254-255; these read SMGAKG and GD. The active-site Proton acceptor is D255.

The protein belongs to the carbohydrate kinase PfkB family.

The enzyme catalyses beta-D-fructose 1-phosphate + ATP = beta-D-fructose 1,6-bisphosphate + ADP + H(+). Its function is as follows. Catalyzes the ATP-dependent phosphorylation of fructose-l-phosphate to fructose-l,6-bisphosphate. The polypeptide is 1-phosphofructokinase (fruK) (Haemophilus influenzae (strain ATCC 51907 / DSM 11121 / KW20 / Rd)).